The primary structure comprises 796 residues: Disintegrin and metalloproteinase domain-containing protein B (796 aa).

The N-terminal stretch at 1-23 (MKALSCLLAVIATAGSLFQHVDA) is a signal peptide. Topologically, residues 24 to 706 (RSHARDRLNN…VSDWVSRHKP (683 aa)) are extracellular. Asparagine 33, asparagine 226, asparagine 313, and asparagine 407 each carry an N-linked (GlcNAc...) asparagine glycan. The region spanning 271-510 (RVALIGVVAD…HSILTNCLTT (240 aa)) is the Peptidase M12B domain. 3 cysteine pairs are disulfide-bonded: cysteine 395–cysteine 495, cysteine 448–cysteine 459, and cysteine 580–cysteine 600. Histidine 431 is a binding site for Zn(2+). Glutamate 432 is a catalytic residue. Positions 435 and 441 each coordinate Zn(2+). The Disintegrin domain occupies 519-608 (GQQCGNGIVE…DCPRDTHSKN (90 aa)). A helical transmembrane segment spans residues 707 to 727 (IVIGVAVGVGCLLLLAILSCI). The Cytoplasmic portion of the chain corresponds to 728 to 796 (CGRSKKRRPR…PGRMPSTRYA (69 aa)). The interval 737 to 796 (RNRKMAPINMRPMPPVYNGWTGPPPNAESPGGHPQYNHVPPPINAPPPAYPGRMPSTRYA) is disordered. Residues 775–786 (VPPPINAPPPAY) show a composition bias toward pro residues.

The cofactor is Zn(2+).

It localises to the membrane. Functionally, probable zinc protease. This Arthroderma otae (strain ATCC MYA-4605 / CBS 113480) (Microsporum canis) protein is Disintegrin and metalloproteinase domain-containing protein B (ADM-B).